Reading from the N-terminus, the 588-residue chain is Transmembrane protein 201 homolog (588 aa).

The Nuclear segment spans residues 1-212 (MEVAAAVGVI…FFFAGGSTCE (212 aa)). A helical membrane pass occupies residues 213–233 (ALHFGCLISSIILFLANIDFL). At 234–254 (QQDAGASLINLPKALQDILPE) the chain is on the perinuclear space side. Residues 255 to 275 (VYKYSFVINFLIFTTHLIAAF) traverse the membrane as a helical segment. The Nuclear portion of the chain corresponds to 276–280 (NNKCR). The chain crosses the membrane as a helical span at residues 281–301 (VTLPDLLLPILLILAMLTVLT). Over 302–309 (SSDNLSQD) the chain is Perinuclear space. Residues 310 to 330 (VALVRGACASFSTILSMAVTL) traverse the membrane as a helical segment. Residues 331–564 (LPRKKLHKKR…SGAWQCRVIG (234 aa)) lie on the Nuclear side of the membrane. A disordered region spans residues 378–457 (RRSPHTPSAS…QSTRSSHFKP (80 aa)). A compositionally biased stretch (low complexity) spans 384–396 (PSASPPAMNSSPP). Composition is skewed to polar residues over residues 418-430 (NMQS…NNHV) and 441-452 (MAAQSVAQSTRS). Residues 565 to 585 (ILFALVFIVLIMQIGLFYVLF) form a helical membrane-spanning segment. The Perinuclear space segment spans residues 586–588 (TRN).

Belongs to the TMEM201 family.

It localises to the nucleus inner membrane. In terms of biological role, plays a role in nuclear migration in hypodermal cells. The chain is Transmembrane protein 201 homolog from Caenorhabditis elegans.